A 372-amino-acid polypeptide reads, in one-letter code: Inner membrane protein YbiR (372 aa).

The Periplasmic portion of the chain corresponds to 1–13 (MSLPFLRTLQGDR). The next 2 helical transmembrane spans lie at 14-34 (FFQL…FAPK) and 35-55 (SWPA…MLLT). Residues 56 to 85 (KGVELSGYFDVLGRKMVRRFATERRLAMFM) are Periplasmic-facing. A helical membrane pass occupies residues 86–106 (VLAAALLSTFLTNDVALFIVV). Topologically, residues 107–122 (PLTITLKRLCEIPVNR) are cytoplasmic. Residues 123-143 (LIIFEALAVNAGSLLTPIGNP) traverse the membrane as a helical segment. At 144–155 (QNILIWGRSGLS) the chain is on the periplasmic side. Residues 156 to 176 (FAGFIAQMAPLAGAMMLTLLL) form a helical membrane-spanning segment. Residues 177–208 (LCWCCFPGKAMQYHTGVQTPEWKPRLVWSCLG) lie on the Cytoplasmic side of the membrane. The helical transmembrane segment at 209–229 (LYIVFLTALEFKQELWGLVIV) threads the bilayer. Residues 230-247 (AAGFALLARRVVLSVDWT) lie on the Periplasmic side of the membrane. A helical membrane pass occupies residues 248 to 268 (LLLVFMAMFIDVHLLTQLPAL). Residues 269–283 (QGVLGNVSHLSEPGL) lie on the Cytoplasmic side of the membrane. The helical transmembrane segment at 284–304 (WLTAIGLSQVISNVPSTILLL) threads the bilayer. The Periplasmic segment spans residues 305–309 (NYVPP). The helical transmembrane segment at 310–330 (SLLLVWAVNVGGFGLLPGSLA) threads the bilayer. The Cytoplasmic segment spans residues 331 to 348 (NLIALRMANDRRIWWRFH). The chain crosses the membrane as a helical span at residues 349–369 (LYSIPMLLWAALVGYVLLVIL). Residues 370–372 (PAN) are Periplasmic-facing.

Belongs to the CitM (TC 2.A.11) transporter family.

It is found in the cell inner membrane. This is Inner membrane protein YbiR (ybiR) from Escherichia coli (strain K12).